The sequence spans 125 residues: N-alpha-acetyltransferase 38, NatC auxiliary subunit (125 aa).

Residues 1 to 42 (MAGAGPTMLLREENGCCSRRQSSSSAGDSDGEQEDSPATRAR) form a disordered region. A2 is modified (N-acetylalanine). Residues 18–28 (SRRQSSSSAGD) show a composition bias toward low complexity. Phosphoserine is present on residues S22, S25, and S29. The Sm domain occupies 40–118 (RARQQLEALL…IVSIEVQRES (79 aa)).

The protein belongs to the snRNP Sm proteins family. As to quaternary structure, component of the N-terminal acetyltransferase C (NatC) complex, which is composed of NAA35, NAA38 and NAA30.

Its subcellular location is the cytoplasm. It is found in the nucleus. Its function is as follows. Auxillary component of the N-terminal acetyltransferase C (NatC) complex which catalyzes acetylation of N-terminal methionine residues. N-terminal acetylation protects proteins from ubiquitination and degradation by the N-end rule pathway. This is N-alpha-acetyltransferase 38, NatC auxiliary subunit (Naa38) from Mus musculus (Mouse).